The following is a 93-amino-acid chain: MDGIKYAVFTDKSIRLLGNNQYTSNVESGSTRTEIKHWVELFFGVKVIAMNSHRLPGKGRRMGPIMGHTMHYRRMIITLQPGYSIPPLRKKRT.

It belongs to the universal ribosomal protein uL23 family. In terms of assembly, part of the 50S ribosomal subunit.

The protein localises to the plastid. It localises to the chloroplast. Binds to 23S rRNA. This is Large ribosomal subunit protein uL23cz/uL23cy (rpl23-A) from Nandina domestica (Heavenly bamboo).